Consider the following 356-residue polypeptide: MKNILLAGAVSMIGTLVGTRWFIHWLAAKGYGQFIRDDGPTTHKTKKGTPTMGGAVIIVSVLLAYLVAHLVTWTHPSISALLVLWLFSGLGFIGFLDDWTKISKQRSLGLKPKGKLLGQAFVAITFAIGVMYFPDVHGVTPGSPAISFLRDISWLYLPVWLGIVWVILLIAGSSNAVNLTDGLDGLATGASTMVFGAYTVLSIWQFNQWCSRPTTAGNHCYAVRDPHDIAVVAIAIAGACFGFLWWNAKPAQIFLGDTGSLALGGAVAGMAVVSRTELLLVIIGALFVIETVSVMLQVSVFKITGGKRVFKMAPLHHHFELKGWAEVTVVIRFWIICGLAVSAGLGIFYAEWVAGQ.

The next 10 membrane-spanning stretches (helical) occupy residues 4-24 (ILLA…WFIH), 53-73 (GGAV…LVTW), 76-96 (PSIS…IGFL), 116-136 (LLGQ…FPDV), 152-172 (ISWL…LIAG), 186-206 (LATG…IWQF), 228-248 (DIAV…WWNA), 253-273 (IFLG…MAVV), 278-298 (LLLV…MLQV), and 333-353 (FWII…AEWV).

This sequence belongs to the glycosyltransferase 4 family. MraY subfamily. The cofactor is Mg(2+).

It is found in the cell membrane. It catalyses the reaction UDP-N-acetyl-alpha-D-muramoyl-L-alanyl-gamma-D-glutamyl-meso-2,6-diaminopimeloyl-D-alanyl-D-alanine + di-trans,octa-cis-undecaprenyl phosphate = di-trans,octa-cis-undecaprenyl diphospho-N-acetyl-alpha-D-muramoyl-L-alanyl-D-glutamyl-meso-2,6-diaminopimeloyl-D-alanyl-D-alanine + UMP. It functions in the pathway cell wall biogenesis; peptidoglycan biosynthesis. In terms of biological role, catalyzes the initial step of the lipid cycle reactions in the biosynthesis of the cell wall peptidoglycan: transfers peptidoglycan precursor phospho-MurNAc-pentapeptide from UDP-MurNAc-pentapeptide onto the lipid carrier undecaprenyl phosphate, yielding undecaprenyl-pyrophosphoryl-MurNAc-pentapeptide, known as lipid I. The sequence is that of Phospho-N-acetylmuramoyl-pentapeptide-transferase from Cutibacterium acnes (strain DSM 16379 / KPA171202) (Propionibacterium acnes).